The sequence spans 508 residues: Mevalonate kinase ERG12 (508 aa).

The segment at 1-46 (MPPSNPAMVNGLNGSHANGNGNGHNHISDSGSETSGESSNGSGRRR) is disordered. The span at 10-42 (NGLNGSHANGNGNGHNHISDSGSETSGESSNGS) shows a compositional bias: low complexity. Residues Lys68, Ser200, and 205–211 (GAGLGSS) each bind ATP. 2 residues coordinate Mg(2+): Ser211 and Glu256. Asp267 serves as the catalytic Proton acceptor.

The protein belongs to the GHMP kinase family. Mevalonate kinase subfamily. In terms of assembly, homodimer. It depends on Mg(2+) as a cofactor.

The protein localises to the cytoplasm. It localises to the cytosol. The enzyme catalyses (R)-mevalonate + ATP = (R)-5-phosphomevalonate + ADP + H(+). The protein operates within isoprenoid biosynthesis; isopentenyl diphosphate biosynthesis via mevalonate pathway; isopentenyl diphosphate from (R)-mevalonate: step 1/3. Its function is as follows. Mevalonate kinase; part of the second module of ergosterol biosynthesis pathway that includes the middle steps of the pathway. ERG12 converts mevalonate into 5-phosphomevalonate. The second module is carried out in the vacuole and involves the formation of farnesyl diphosphate, which is also an important intermediate in the biosynthesis of ubiquinone, dolichol, heme and prenylated proteins. Activity by the mevalonate kinase ERG12 (FG05912) first converts mevalonate into 5-phosphomevalonate. 5-phosphomevalonate is then further converted to 5-diphosphomevalonate by the phosphomevalonate kinase ERG8 (FG09764). The diphosphomevalonate decarboxylase ERG19 (FG10424) then produces isopentenyl diphosphate. The isopentenyl-diphosphate delta-isomerase IDI1 (FG09722) then catalyzes the 1,3-allylic rearrangement of the homoallylic substrate isopentenyl (IPP) to its highly electrophilic allylic isomer, dimethylallyl diphosphate (DMAPP). Finally the farnesyl diphosphate synthase ERG20 (FG06784) catalyzes the sequential condensation of isopentenyl pyrophosphate with dimethylallyl pyrophosphate, and then with the resultant geranylpyrophosphate to the ultimate product farnesyl pyrophosphate. The protein is Mevalonate kinase ERG12 of Gibberella zeae (strain ATCC MYA-4620 / CBS 123657 / FGSC 9075 / NRRL 31084 / PH-1) (Wheat head blight fungus).